Reading from the N-terminus, the 1248-residue chain is Bifunctional autolysin (1248 aa).

Residues 1–29 (MAKKFNYKLPSMVALTLVGSAVTAHQVQA) form the signal peptide. The tract at residues 103 to 134 (GDTRANQSATTNNTQPVAKSTSTTAPKTNTNV) is disordered. Residues 191–767 (ASAQPRSVAA…AVAQPKTAVK (577 aa)) are N-acetylmuramoyl-L-alanine amidase. GW domains lie at 435–509 (TVAA…YNTA), 511–585 (SPVN…DTAK), 604–678 (TVSS…YNNA), 680–754 (SPVN…VPAA), 776–851 (TTQT…VQNL), 853–928 (KEVK…APTA), and 935–1009 (AAKD…KELI). The interval 768 to 1248 (AYTVTKPQTT…GKYFDIPQYK (481 aa)) is endo-beta-N-acetylglucosaminidase.

In the N-terminal section; belongs to the N-acetylmuramoyl-L-alanine amidase 2 family. The protein in the C-terminal section; belongs to the glycosyl hydrolase 73 family. Oligomer; forms a ring structure at the cell surface which is important for efficient partitioning of daughter cells after cell division. Undergoes proteolytic processing to generate the two extracellular lytic enzymes, probably at the septal region on the cell surface.

It localises to the secreted. It carries out the reaction Hydrolyzes the link between N-acetylmuramoyl residues and L-amino acid residues in certain cell-wall glycopeptides.. The catalysed reaction is an N(4)-(oligosaccharide-(1-&gt;3)-[oligosaccharide-(1-&gt;6)]-beta-D-Man-(1-&gt;4)-beta-D-GlcNAc-(1-&gt;4)-alpha-D-GlcNAc)-L-asparaginyl-[protein] + H2O = an oligosaccharide-(1-&gt;3)-[oligosaccharide-(1-&gt;6)]-beta-D-Man-(1-&gt;4)-D-GlcNAc + N(4)-(N-acetyl-beta-D-glucosaminyl)-L-asparaginyl-[protein]. Endohydrolysis of the di-N-acetylchitobiosyl unit in high-mannose glycopeptides and glycoproteins containing the -[(Man)5(GlcNAc)2]-Asn structure. One N-acetyl-D-glucosamine residue remains attached to the protein; the rest of the oligosaccharide is released intact. Cleaves the peptidoglycan connecting the daughter cells at the end of the cell division cycle, resulting in the separation of the two newly divided cells. Acts as an autolysin in penicillin-induced lysis. The polypeptide is Bifunctional autolysin (atl) (Staphylococcus aureus (strain Mu50 / ATCC 700699)).